The primary structure comprises 1417 residues: DNA-directed RNA polymerase subunit beta' (1417 aa).

Zn(2+) contacts are provided by cysteine 68, cysteine 70, cysteine 83, and cysteine 86. Mg(2+) is bound by residues aspartate 458, aspartate 460, and aspartate 462. Zn(2+)-binding residues include cysteine 811, cysteine 884, cysteine 891, and cysteine 894.

It belongs to the RNA polymerase beta' chain family. The RNAP catalytic core consists of 2 alpha, 1 beta, 1 beta' and 1 omega subunit. When a sigma factor is associated with the core the holoenzyme is formed, which can initiate transcription. The cofactor is Mg(2+). Zn(2+) is required as a cofactor.

The catalysed reaction is RNA(n) + a ribonucleoside 5'-triphosphate = RNA(n+1) + diphosphate. In terms of biological role, DNA-dependent RNA polymerase catalyzes the transcription of DNA into RNA using the four ribonucleoside triphosphates as substrates. The protein is DNA-directed RNA polymerase subunit beta' of Francisella tularensis subsp. holarctica (strain OSU18).